The primary structure comprises 445 residues: Phosphoglucosamine mutase 1 (445 aa).

Residue serine 102 is the Phosphoserine intermediate of the active site. Serine 102, aspartate 241, aspartate 243, and aspartate 245 together coordinate Mg(2+). Serine 102 carries the post-translational modification Phosphoserine.

It belongs to the phosphohexose mutase family. The cofactor is Mg(2+). Activated by phosphorylation.

It catalyses the reaction alpha-D-glucosamine 1-phosphate = D-glucosamine 6-phosphate. In terms of biological role, catalyzes the conversion of glucosamine-6-phosphate to glucosamine-1-phosphate. The protein is Phosphoglucosamine mutase 1 of Shewanella frigidimarina (strain NCIMB 400).